A 449-amino-acid chain; its full sequence is Packaging protein 1 (449 aa).

A disordered region spans residues 1–77; the sequence is METRGRRPAA…QPAKRGDMLD (77 aa). ATP is bound at residue 171–178; the sequence is GPTGCGKS. The tract at residues 440-449 is DNA-binding; the sequence is RAYRARKTPK.

This sequence belongs to the adenoviridae packaging protein 1 family. In terms of assembly, homodimer. Part of a genome packaging complex composed of packaging proteins 1, 2 and 3; this complex specifically binds to the packaging sequence on the left end of viral genomic DNA and performs packaging of the viral genome. Interacts with protein 33K.

It is found in the virion. It localises to the host nucleus. The protein localises to the host nucleoplasm. The protein resides in the host nucleolus. Its function is as follows. Component of the packaging machinery which encapsidates the viral DNA into preformed capsids and transcriptional activator of the viral major late promoter (MLP). Binds, along with packaging proteins 2 and 3, to the specific packaging sequence on the left end of viral genomic DNA and displays ATPase activity thereby providing the power stroke of the packaging machinery. The activity of packaging protein IVa2 is stimulated by protein 33K which acts as a terminase. May be the protein that pumps DNA into the capsid powered by ATP hydrolysis. Specifically binds to the 5'-CG-3' nucleotides of the repeats making up the packaging sequence. Component of the DEF-A and DEF-B transcription factors that bind downstream elements of the major late promoter (MLP), and stimulate transcription from the MLP after initiation of viral DNA replication. DEF-A is a heterodimer packaging proteins 1 and 2 and DEF-B is a homodimer of packaging protein 1. In Homo sapiens (Human), this protein is Packaging protein 1.